The primary structure comprises 478 residues: UDP-N-acetylmuramate--L-alanine ligase (478 aa).

126–132 (GTHGKTT) lines the ATP pocket.

The protein belongs to the MurCDEF family.

It localises to the cytoplasm. The enzyme catalyses UDP-N-acetyl-alpha-D-muramate + L-alanine + ATP = UDP-N-acetyl-alpha-D-muramoyl-L-alanine + ADP + phosphate + H(+). The protein operates within cell wall biogenesis; peptidoglycan biosynthesis. Cell wall formation. This Synechococcus sp. (strain JA-2-3B'a(2-13)) (Cyanobacteria bacterium Yellowstone B-Prime) protein is UDP-N-acetylmuramate--L-alanine ligase.